The following is a 370-amino-acid chain: Probable dual-specificity RNA methyltransferase RlmN (370 aa).

Catalysis depends on E91, which acts as the Proton acceptor. A Radical SAM core domain is found at 97–329 (QHYGLSVCVT…KKNGVNCVVR (233 aa)). C104 and C340 are joined by a disulfide. Positions 111, 115, and 118 each coordinate [4Fe-4S] cluster. S-adenosyl-L-methionine contacts are provided by residues 163–164 (GE), S195, 218–220 (SLH), and N296. The S-methylcysteine intermediate role is filled by C340.

It belongs to the radical SAM superfamily. RlmN family. The cofactor is [4Fe-4S] cluster.

Its subcellular location is the cytoplasm. It catalyses the reaction adenosine(2503) in 23S rRNA + 2 reduced [2Fe-2S]-[ferredoxin] + 2 S-adenosyl-L-methionine = 2-methyladenosine(2503) in 23S rRNA + 5'-deoxyadenosine + L-methionine + 2 oxidized [2Fe-2S]-[ferredoxin] + S-adenosyl-L-homocysteine. The enzyme catalyses adenosine(37) in tRNA + 2 reduced [2Fe-2S]-[ferredoxin] + 2 S-adenosyl-L-methionine = 2-methyladenosine(37) in tRNA + 5'-deoxyadenosine + L-methionine + 2 oxidized [2Fe-2S]-[ferredoxin] + S-adenosyl-L-homocysteine. Functionally, specifically methylates position 2 of adenine 2503 in 23S rRNA and position 2 of adenine 37 in tRNAs. This is Probable dual-specificity RNA methyltransferase RlmN from Streptococcus suis (strain 98HAH33).